Reading from the N-terminus, the 403-residue chain is Argininosuccinate synthase (403 aa).

Residues 10 to 18 (AYSGGVDTS) and Ala38 each bind ATP. Tyr89 lines the L-citrulline pocket. Gly119 is an ATP binding site. Thr121, Asn125, and Asp126 together coordinate L-aspartate. An L-citrulline-binding site is contributed by Asn125. Positions 129, 177, 186, 262, and 274 each coordinate L-citrulline.

It belongs to the argininosuccinate synthase family. Type 1 subfamily. As to quaternary structure, homotetramer.

The protein resides in the cytoplasm. The enzyme catalyses L-citrulline + L-aspartate + ATP = 2-(N(omega)-L-arginino)succinate + AMP + diphosphate + H(+). The protein operates within amino-acid biosynthesis; L-arginine biosynthesis; L-arginine from L-ornithine and carbamoyl phosphate: step 2/3. This chain is Argininosuccinate synthase, found in Synechococcus sp. (strain CC9605).